The primary structure comprises 275 residues: Putative phosphoenolpyruvate synthase regulatory protein (275 aa).

153–160 (GVSRTGKT) is a binding site for ADP.

It belongs to the pyruvate, phosphate/water dikinase regulatory protein family. PSRP subfamily.

It catalyses the reaction [pyruvate, water dikinase] + ADP = [pyruvate, water dikinase]-phosphate + AMP + H(+). It carries out the reaction [pyruvate, water dikinase]-phosphate + phosphate + H(+) = [pyruvate, water dikinase] + diphosphate. In terms of biological role, bifunctional serine/threonine kinase and phosphorylase involved in the regulation of the phosphoenolpyruvate synthase (PEPS) by catalyzing its phosphorylation/dephosphorylation. The polypeptide is Putative phosphoenolpyruvate synthase regulatory protein (Nitrosomonas europaea (strain ATCC 19718 / CIP 103999 / KCTC 2705 / NBRC 14298)).